Reading from the N-terminus, the 387-residue chain is 1-deoxy-D-xylulose 5-phosphate reductoisomerase (387 aa).

7 residues coordinate NADPH: threonine 10, glycine 11, serine 12, isoleucine 13, glycine 36, asparagine 38, and asparagine 122. Lysine 123 is a 1-deoxy-D-xylulose 5-phosphate binding site. Glutamate 124 contributes to the NADPH binding site. Aspartate 148 contacts Mn(2+). Positions 149, 150, 174, and 197 each coordinate 1-deoxy-D-xylulose 5-phosphate. Glutamate 150 lines the Mn(2+) pocket. Glycine 203 contacts NADPH. The 1-deoxy-D-xylulose 5-phosphate site is built by serine 210, asparagine 215, lysine 216, and glutamate 219. Mn(2+) is bound at residue glutamate 219.

This sequence belongs to the DXR family. Mg(2+) serves as cofactor. It depends on Mn(2+) as a cofactor.

The enzyme catalyses 2-C-methyl-D-erythritol 4-phosphate + NADP(+) = 1-deoxy-D-xylulose 5-phosphate + NADPH + H(+). It participates in isoprenoid biosynthesis; isopentenyl diphosphate biosynthesis via DXP pathway; isopentenyl diphosphate from 1-deoxy-D-xylulose 5-phosphate: step 1/6. Functionally, catalyzes the NADPH-dependent rearrangement and reduction of 1-deoxy-D-xylulose-5-phosphate (DXP) to 2-C-methyl-D-erythritol 4-phosphate (MEP). The polypeptide is 1-deoxy-D-xylulose 5-phosphate reductoisomerase (Chloroherpeton thalassium (strain ATCC 35110 / GB-78)).